Reading from the N-terminus, the 414-residue chain is 5-aminolevulinate synthase (414 aa).

Positions 22, 133, and 152 each coordinate substrate. Residues Ser185, His213, and Thr241 each contribute to the pyridoxal 5'-phosphate site. The active site involves Lys244. Lys244 is subject to N6-(pyridoxal phosphate)lysine. Pyridoxal 5'-phosphate is bound by residues Thr273 and Thr274. Substrate is bound at residue Thr359.

The protein belongs to the class-II pyridoxal-phosphate-dependent aminotransferase family. In terms of assembly, homodimer. Requires pyridoxal 5'-phosphate as cofactor.

It catalyses the reaction succinyl-CoA + glycine + H(+) = 5-aminolevulinate + CO2 + CoA. Its pathway is porphyrin-containing compound metabolism; protoporphyrin-IX biosynthesis; 5-aminolevulinate from glycine: step 1/1. The sequence is that of 5-aminolevulinate synthase (hemA) from Rickettsia prowazekii (strain Madrid E).